Here is a 179-residue protein sequence, read N- to C-terminus: Large ribosomal subunit protein uL5 (179 aa).

The protein belongs to the universal ribosomal protein uL5 family. Part of the 50S ribosomal subunit; part of the 5S rRNA/L5/L18/L25 subcomplex. Contacts the 5S rRNA and the P site tRNA. Forms a bridge to the 30S subunit in the 70S ribosome.

In terms of biological role, this is one of the proteins that bind and probably mediate the attachment of the 5S RNA into the large ribosomal subunit, where it forms part of the central protuberance. In the 70S ribosome it contacts protein S13 of the 30S subunit (bridge B1b), connecting the 2 subunits; this bridge is implicated in subunit movement. Contacts the P site tRNA; the 5S rRNA and some of its associated proteins might help stabilize positioning of ribosome-bound tRNAs. The sequence is that of Large ribosomal subunit protein uL5 from Anoxybacillus flavithermus (strain DSM 21510 / WK1).